We begin with the raw amino-acid sequence, 91 residues long: Probable Fe(2+)-trafficking protein (91 aa).

The protein belongs to the Fe(2+)-trafficking protein family.

In terms of biological role, could be a mediator in iron transactions between iron acquisition and iron-requiring processes, such as synthesis and/or repair of Fe-S clusters in biosynthetic enzymes. The protein is Probable Fe(2+)-trafficking protein of Ralstonia nicotianae (strain ATCC BAA-1114 / GMI1000) (Ralstonia solanacearum).